We begin with the raw amino-acid sequence, 169 residues long: NADH-quinone oxidoreductase subunit I (169 aa).

4Fe-4S ferredoxin-type domains lie at 60–90 (LRRY…IEAE) and 100–129 (TRYD…EGPN). Cysteine 70, cysteine 73, cysteine 76, cysteine 80, cysteine 109, cysteine 112, cysteine 115, and cysteine 119 together coordinate [4Fe-4S] cluster.

It belongs to the complex I 23 kDa subunit family. In terms of assembly, NDH-1 is composed of 14 different subunits. Subunits NuoA, H, J, K, L, M, N constitute the membrane sector of the complex. [4Fe-4S] cluster serves as cofactor.

Its subcellular location is the cell membrane. It carries out the reaction a quinone + NADH + 5 H(+)(in) = a quinol + NAD(+) + 4 H(+)(out). In terms of biological role, NDH-1 shuttles electrons from NADH, via FMN and iron-sulfur (Fe-S) centers, to quinones in the respiratory chain. The immediate electron acceptor for the enzyme in this species is believed to be ubiquinone. Couples the redox reaction to proton translocation (for every two electrons transferred, four hydrogen ions are translocated across the cytoplasmic membrane), and thus conserves the redox energy in a proton gradient. This chain is NADH-quinone oxidoreductase subunit I, found in Wolbachia pipientis wMel.